The following is a 132-amino-acid chain: Small ribosomal subunit protein uS8 (132 aa).

The protein belongs to the universal ribosomal protein uS8 family. As to quaternary structure, part of the 30S ribosomal subunit. Contacts proteins S5 and S12.

Its function is as follows. One of the primary rRNA binding proteins, it binds directly to 16S rRNA central domain where it helps coordinate assembly of the platform of the 30S subunit. This chain is Small ribosomal subunit protein uS8, found in Gluconobacter oxydans (strain 621H) (Gluconobacter suboxydans).